The chain runs to 222 residues: 7-cyano-7-deazaguanine synthase (222 aa).

7 to 17 (LSGGMDSAVAT) serves as a coordination point for ATP. Positions 188, 196, 199, and 202 each coordinate Zn(2+).

Belongs to the QueC family. Zn(2+) is required as a cofactor.

It catalyses the reaction 7-carboxy-7-deazaguanine + NH4(+) + ATP = 7-cyano-7-deazaguanine + ADP + phosphate + H2O + H(+). It functions in the pathway purine metabolism; 7-cyano-7-deazaguanine biosynthesis. Functionally, catalyzes the ATP-dependent conversion of 7-carboxy-7-deazaguanine (CDG) to 7-cyano-7-deazaguanine (preQ(0)). This Methanothermobacter thermautotrophicus (strain ATCC 29096 / DSM 1053 / JCM 10044 / NBRC 100330 / Delta H) (Methanobacterium thermoautotrophicum) protein is 7-cyano-7-deazaguanine synthase.